The following is a 438-amino-acid chain: Gamma-glutamyl phosphate reductase (438 aa).

This sequence belongs to the gamma-glutamyl phosphate reductase family.

Its subcellular location is the cytoplasm. The enzyme catalyses L-glutamate 5-semialdehyde + phosphate + NADP(+) = L-glutamyl 5-phosphate + NADPH + H(+). The protein operates within amino-acid biosynthesis; L-proline biosynthesis; L-glutamate 5-semialdehyde from L-glutamate: step 2/2. Catalyzes the NADPH-dependent reduction of L-glutamate 5-phosphate into L-glutamate 5-semialdehyde and phosphate. The product spontaneously undergoes cyclization to form 1-pyrroline-5-carboxylate. In Prochlorococcus marinus (strain MIT 9303), this protein is Gamma-glutamyl phosphate reductase.